Consider the following 185-residue polypeptide: Ribosome-recycling factor (185 aa).

Belongs to the RRF family.

It is found in the cytoplasm. Responsible for the release of ribosomes from messenger RNA at the termination of protein biosynthesis. May increase the efficiency of translation by recycling ribosomes from one round of translation to another. The polypeptide is Ribosome-recycling factor (Aeromonas salmonicida (strain A449)).